The chain runs to 224 residues: Cytidylate kinase (224 aa).

11-19 (GPAAAGKST) provides a ligand contact to ATP.

Belongs to the cytidylate kinase family. Type 1 subfamily.

It localises to the cytoplasm. The enzyme catalyses CMP + ATP = CDP + ADP. It catalyses the reaction dCMP + ATP = dCDP + ADP. The protein is Cytidylate kinase of Listeria monocytogenes serotype 4b (strain CLIP80459).